Consider the following 303-residue polypeptide: Putative AraC-like transcription regulator (303 aa).

The HTH araC/xylS-type domain occupies 202–300; that stretch reads ASALTFLHRD…GMNPGDYRKH (99 aa). DNA-binding regions (H-T-H motif) lie at residues 219–240 and 267–290; these read AELA…KATV and LAAI…KRVL.

The chain is Putative AraC-like transcription regulator from Streptomyces antibioticus.